A 393-amino-acid chain; its full sequence is tRNA(Met) cytidine acetate ligase (393 aa).

Positions 81, 142, and 167 each coordinate ATP.

It belongs to the TmcAL family.

It localises to the cytoplasm. The catalysed reaction is cytidine(34) in elongator tRNA(Met) + acetate + ATP = N(4)-acetylcytidine(34) in elongator tRNA(Met) + AMP + diphosphate. Catalyzes the formation of N(4)-acetylcytidine (ac(4)C) at the wobble position of elongator tRNA(Met), using acetate and ATP as substrates. First activates an acetate ion to form acetyladenylate (Ac-AMP) and then transfers the acetyl group to tRNA to form ac(4)C34. The protein is tRNA(Met) cytidine acetate ligase of Bacillus cereus (strain ATCC 10987 / NRS 248).